Consider the following 371-residue polypeptide: Cytochrome b (371 aa).

Helical transmembrane passes span 25-45, 69-90, 105-125, and 170-190; these read FGSM…FLSM, WMMQ…YMHI, WLSG…GYVL, and FFAL…VHIM. Heme b-binding residues include His75 and His89. Heme b-binding residues include His174 and His188. His193 serves as a coordination point for a ubiquinone. Helical transmembrane passes span 218-238, 280-300, 312-332, and 339-358; these read YKDL…VSFF, LGGA…PFTH, LMQF…WTAT, and FTTI…MSNP.

The protein belongs to the cytochrome b family. As to quaternary structure, the cytochrome bc1 complex contains 3 respiratory subunits (MT-CYB, CYC1 and UQCRFS1), 2 core proteins (UQCRC1 and UQCRC2) and probably 6 low-molecular weight proteins. Requires heme b as cofactor.

It localises to the mitochondrion inner membrane. Component of the ubiquinol-cytochrome c reductase complex (complex III or cytochrome b-c1 complex) that is part of the mitochondrial respiratory chain. The b-c1 complex mediates electron transfer from ubiquinol to cytochrome c. Contributes to the generation of a proton gradient across the mitochondrial membrane that is then used for ATP synthesis. The polypeptide is Cytochrome b (MT-CYB) (Candoia carinata (Papuan tree boa)).